We begin with the raw amino-acid sequence, 328 residues long: Glutathionyl-hydroquinone reductase YqjG (328 aa).

Cys63 functions as the Nucleophile in the catalytic mechanism. Residues Trp96, 130-133 (RVTV), and 148-149 (ES) contribute to the glutathione site. The region spanning 172 to 296 (PPALQTKIDE…VNFDHIRNHY (125 aa)) is the GST C-terminal domain. Tyr195 functions as the Proton donor/acceptor in the catalytic mechanism. A dimerization region spans residues 203-311 (QEAYDEAVAK…TINPTGIISI (109 aa)).

This sequence belongs to the GST superfamily. Xi-class GSH transferase family. Homodimer.

The enzyme catalyses 2-(glutathione-S-yl)-hydroquinone + glutathione = hydroquinone + glutathione disulfide. In terms of biological role, catalyzes glutathione (GSH)-dependent reduction of glutathionyl-hydroquinones (GS-HQs) to the corresponding hydroquinones. Can use a variety of GS-HQs as substrates, such as GS-p-hydroquinone (GS-HQ), GS-hydroxy-p-hydroquinone (GS-HHQ), GS-methyl-p-hydroquinone (GS-MHQ), GS-menadiol, and GS-trichloro-p-hydroquinone (GS-TriCH). Also displays GSH-dependent disulfide-bond reduction activity toward HED (2-hydroxyethyl disulfide), and is able to catalyze DMA (dimethylarsinate) reduction. Exhibits no GSH transferase activity with 1-chloro-2,4-dinitrobenzene (CDNB). This Escherichia coli (strain K12) protein is Glutathionyl-hydroquinone reductase YqjG (yqjG).